We begin with the raw amino-acid sequence, 511 residues long: 2,3-bisphosphoglycerate-independent phosphoglycerate mutase (511 aa).

Mn(2+)-binding residues include Asp14 and Ser64. Ser64 functions as the Phosphoserine intermediate in the catalytic mechanism. Residues His125, 155-156, Arg187, Arg193, 259-262, and Lys333 contribute to the substrate site; these read RD and RADR. Mn(2+)-binding residues include Asp400, His404, Asp441, His442, and His460.

This sequence belongs to the BPG-independent phosphoglycerate mutase family. In terms of assembly, monomer. Requires Mn(2+) as cofactor.

The catalysed reaction is (2R)-2-phosphoglycerate = (2R)-3-phosphoglycerate. The protein operates within carbohydrate degradation; glycolysis; pyruvate from D-glyceraldehyde 3-phosphate: step 3/5. In terms of biological role, catalyzes the interconversion of 2-phosphoglycerate and 3-phosphoglycerate. This chain is 2,3-bisphosphoglycerate-independent phosphoglycerate mutase, found in Pseudomonas entomophila (strain L48).